The primary structure comprises 376 residues: uncharacterized protein (376 aa).

A helical membrane pass occupies residues 19-39 (FVLISLILLLNLGLLLGIQIY).

This sequence to S.pombe SpAC5H10.12c.

The protein localises to the cytoplasm. Its subcellular location is the nucleus. It is found in the membrane. This is an uncharacterized protein from Schizosaccharomyces pombe (strain 972 / ATCC 24843) (Fission yeast).